A 156-amino-acid polypeptide reads, in one-letter code: uncharacterized protein (156 aa).

This is an uncharacterized protein from Invertebrate iridescent virus 3 (IIV-3).